A 417-amino-acid polypeptide reads, in one-letter code: Serine--tRNA ligase (417 aa).

Residue 226 to 228 (TSE) coordinates L-serine. ATP is bound by residues 257–259 (RRE) and Val273. Residue Glu280 coordinates L-serine. 344 to 347 (ELTS) provides a ligand contact to ATP. Thr379 contributes to the L-serine binding site.

Belongs to the class-II aminoacyl-tRNA synthetase family. Type-1 seryl-tRNA synthetase subfamily. In terms of assembly, homodimer. The tRNA molecule binds across the dimer.

The protein resides in the cytoplasm. The enzyme catalyses tRNA(Ser) + L-serine + ATP = L-seryl-tRNA(Ser) + AMP + diphosphate + H(+). The catalysed reaction is tRNA(Sec) + L-serine + ATP = L-seryl-tRNA(Sec) + AMP + diphosphate + H(+). It functions in the pathway aminoacyl-tRNA biosynthesis; selenocysteinyl-tRNA(Sec) biosynthesis; L-seryl-tRNA(Sec) from L-serine and tRNA(Sec): step 1/1. Functionally, catalyzes the attachment of serine to tRNA(Ser). Is also able to aminoacylate tRNA(Sec) with serine, to form the misacylated tRNA L-seryl-tRNA(Sec), which will be further converted into selenocysteinyl-tRNA(Sec). The sequence is that of Serine--tRNA ligase from Mycobacterium sp. (strain KMS).